A 361-amino-acid chain; its full sequence is S-adenosylmethionine:tRNA ribosyltransferase-isomerase (361 aa).

It belongs to the QueA family. In terms of assembly, monomer.

It is found in the cytoplasm. The catalysed reaction is 7-aminomethyl-7-carbaguanosine(34) in tRNA + S-adenosyl-L-methionine = epoxyqueuosine(34) in tRNA + adenine + L-methionine + 2 H(+). Its pathway is tRNA modification; tRNA-queuosine biosynthesis. In terms of biological role, transfers and isomerizes the ribose moiety from AdoMet to the 7-aminomethyl group of 7-deazaguanine (preQ1-tRNA) to give epoxyqueuosine (oQ-tRNA). In Mesorhizobium japonicum (strain LMG 29417 / CECT 9101 / MAFF 303099) (Mesorhizobium loti (strain MAFF 303099)), this protein is S-adenosylmethionine:tRNA ribosyltransferase-isomerase.